The sequence spans 80 residues: UPF0180 protein BPUM_1317 (80 aa).

The protein belongs to the UPF0180 family.

The polypeptide is UPF0180 protein BPUM_1317 (Bacillus pumilus (strain SAFR-032)).